Reading from the N-terminus, the 402-residue chain is Zinc finger CCHC domain-containing protein 12 (402 aa).

The disordered stretch occupies residues 1 to 20 (MASILSRLGSSRGQNSPLPP). A CCHC-type zinc finger spans residues 346-363 (IHCSHCGEEGHSKETCDN). A disordered region spans residues 383–402 (HAEERARGAPGEPIGLSEPQ).

This sequence belongs to the ZCCHC12 family. As to quaternary structure, interacts with SMAD1 and CREB-binding protein (CBP). Forms a protein-DNA complex through its association with SMAD1. As to expression, in embryonic brains expression is restricted to the ventral region of the forebrain, including the septum, amygdala, caudal putamen, and in the basal-forebrain cholinergic neurons. In adults, expressed in the brain, and at low levels in the testis.

Transcriptional coactivator in the bone morphogenetic protein (BMP)-signaling pathway. It positively modulates BMP signaling by interacting with SMAD1 and associating with CBP in the transcription complex. It contributes to the BMP-induced enhancement of cholinergic-neuron-specific gene expression. The polypeptide is Zinc finger CCHC domain-containing protein 12 (Zcchc12) (Mus musculus (Mouse)).